The following is a 194-amino-acid chain: Nucleoside triphosphate pyrophosphatase (194 aa).

The active-site Proton acceptor is the Asp71.

Belongs to the Maf family. A divalent metal cation is required as a cofactor.

Its subcellular location is the cytoplasm. The enzyme catalyses a ribonucleoside 5'-triphosphate + H2O = a ribonucleoside 5'-phosphate + diphosphate + H(+). It catalyses the reaction a 2'-deoxyribonucleoside 5'-triphosphate + H2O = a 2'-deoxyribonucleoside 5'-phosphate + diphosphate + H(+). Nucleoside triphosphate pyrophosphatase. May have a dual role in cell division arrest and in preventing the incorporation of modified nucleotides into cellular nucleic acids. This chain is Nucleoside triphosphate pyrophosphatase, found in Paramagnetospirillum magneticum (strain ATCC 700264 / AMB-1) (Magnetospirillum magneticum).